Here is a 290-residue protein sequence, read N- to C-terminus: Glyceraldehyde-3-phosphate dehydrogenase (290 aa).

NAD(+) is bound by residues D13 and R58. D-glyceraldehyde 3-phosphate contacts are provided by residues 129–131, T160, 189–190, and R212; these read SCT and TG. C130 serves as the catalytic Nucleophile.

The protein belongs to the glyceraldehyde-3-phosphate dehydrogenase family. As to quaternary structure, homotetramer.

It is found in the cytoplasm. It catalyses the reaction D-glyceraldehyde 3-phosphate + phosphate + NAD(+) = (2R)-3-phospho-glyceroyl phosphate + NADH + H(+). The protein operates within carbohydrate degradation; glycolysis; pyruvate from D-glyceraldehyde 3-phosphate: step 1/5. In Lactarius deterrimus (False saffron milkcap), this protein is Glyceraldehyde-3-phosphate dehydrogenase (GPD).